We begin with the raw amino-acid sequence, 368 residues long: tRNA(Met) cytidine acetate ligase (368 aa).

ATP is bound by residues Ile7–Leu20, Gly96, Asn152, and Arg175.

The protein belongs to the TmcAL family.

The protein localises to the cytoplasm. The enzyme catalyses cytidine(34) in elongator tRNA(Met) + acetate + ATP = N(4)-acetylcytidine(34) in elongator tRNA(Met) + AMP + diphosphate. Its function is as follows. Catalyzes the formation of N(4)-acetylcytidine (ac(4)C) at the wobble position of elongator tRNA(Met), using acetate and ATP as substrates. First activates an acetate ion to form acetyladenylate (Ac-AMP) and then transfers the acetyl group to tRNA to form ac(4)C34. The protein is tRNA(Met) cytidine acetate ligase of Streptococcus pyogenes serotype M1.